The sequence spans 559 residues: Myb/SANT-like DNA-binding domain-containing protein 2 (559 aa).

Residues 1–62 are disordered; that stretch reads MAAPCGSELP…GSAAGSGAAA (62 aa). Phosphoserine occurs at positions 13, 24, 27, 32, and 48. Positions 46-61 are enriched in low complexity; that stretch reads GASPLGPGSAAGSGAA. One can recognise a Myb-like domain in the interval 103-173; that stretch reads SWTPAETNAL…QCRERIKTLR (71 aa). Residues Lys-268 and Lys-343 each participate in a glycyl lysine isopeptide (Lys-Gly) (interchain with G-Cter in SUMO2) cross-link. At Ser-436 the chain carries Phosphoserine.

In Mus musculus (Mouse), this protein is Myb/SANT-like DNA-binding domain-containing protein 2 (Msantd2).